We begin with the raw amino-acid sequence, 455 residues long: Putative PTS system EIIBC component YbbF (455 aa).

Positions 8-90 (HHLAQKILEL…SKLVSAEEGA (83 aa)) constitute a PTS EIIB type-1 domain. Cysteine 30 serves as the catalytic Phosphocysteine intermediate; for EIIB activity. Residues 116–455 (RKIASIFIPL…YKDEMASQFD (340 aa)) form the PTS EIIC type-1 domain. 10 helical membrane passes run 118–138 (IASIFIPLIPALVASGLITGI), 154–174 (IAIILTVIGSGLFTYLGILVG), 181–201 (FGGTPALGALAGILIINPEIA), 210–230 (LLPGRGGLIGVLFAAIFIAYT), 250–270 (VSLLITGIVTYVVFMPLGGFI), 281–301 (ILDIGGIAAGFILGATFLPLV), 325–345 (LLPILAMGGAGQVGAAFAVFV), 355–375 (AIAGGLPSGLLGIGEPLIFGV), 399–419 (YFQVATIAIGVSGLPLSFLVL), and 423–443 (IILYIVGLFISYAAGFLLTYA).

Its subcellular location is the cell membrane. Its function is as follows. The phosphoenolpyruvate-dependent sugar phosphotransferase system (sugar PTS), a major carbohydrate active -transport system, catalyzes the phosphorylation of incoming sugar substrates concomitantly with their translocation across the cell membrane. The polypeptide is Putative PTS system EIIBC component YbbF (ybbF) (Bacillus subtilis (strain 168)).